Here is a 600-residue protein sequence, read N- to C-terminus: CDK5RAP1-like protein (600 aa).

The disordered stretch occupies residues 45–66; sequence LSSAAHPPPPPPRRLARSGPSR. The MTTase N-terminal domain occupies 93–222; sequence GRIYHETYGC…LPRLLQEVDY (130 aa). [4Fe-4S] cluster is bound by residues Cys-102, Cys-139, Cys-185, Cys-260, Cys-264, and Cys-267. The Radical SAM core domain maps to 246 to 501; it reads SDNSVTAFVS…ISTFRETTAK (256 aa). A TRAM domain is found at 504–580; sequence DSQVGTVQLV…TASLSGDVIA (77 aa).

Belongs to the methylthiotransferase family. MiaB subfamily. [4Fe-4S] cluster serves as cofactor.

Its function is as follows. Potential regulator of CDK5 activity. The chain is CDK5RAP1-like protein from Oryza sativa subsp. japonica (Rice).